The chain runs to 257 residues: Sulfur carrier protein FdhD (257 aa).

Cysteine 105 serves as the catalytic Cysteine persulfide intermediate.

The protein belongs to the FdhD family.

It is found in the cytoplasm. Its function is as follows. Required for formate dehydrogenase (FDH) activity. Acts as a sulfur carrier protein that transfers sulfur from IscS to the molybdenum cofactor prior to its insertion into FDH. The protein is Sulfur carrier protein FdhD of Saccharolobus solfataricus (strain ATCC 35092 / DSM 1617 / JCM 11322 / P2) (Sulfolobus solfataricus).